The primary structure comprises 641 residues: 1,3-beta-glucanosyltransferase PGA5 (641 aa).

The signal sequence occupies residues 1–23 (MTTLSTIWLFLITITAIFQLGLS). An N-linked (GlcNAc...) asparagine glycan is attached at N25. Residues C106 and C135 are joined by a disulfide bond. 5 residues coordinate (1,3-beta-D-glucosyl)n: Y124, N192, E193, D234, and R239. E193 serves as the catalytic Proton donor. 6 disulfides stabilise this stretch: C248–C390, C276–C307, C424–C474, C426–C528, C433–C498, and C451–C456. The active-site Nucleophile is E304. Y336 serves as a coordination point for (1,3-beta-D-glucosyl)n. A disordered region spans residues 535-613 (KEEEKEVQEE…SPKTSKSIAG (79 aa)). Residues 571-581 (KSKEKEKGKLI) are compositionally biased toward basic and acidic residues. Positions 582–593 (EEEEEEEEEEEE) are enriched in acidic residues. The segment covering 596-610 (KTPSSGEKSPKTSKS) has biased composition (polar residues). N621 is a glycosylation site (N-linked (GlcNAc...) asparagine). Residue D622 is the site of GPI-anchor amidated aspartate attachment. Residues 623-641 (SIWKTFIEILFTCSAAILI) constitute a propeptide, removed in mature form.

It belongs to the glycosyl hydrolase 72 family.

The protein resides in the cell membrane. Functionally, splits internally a 1,3-beta-glucan molecule and transfers the newly generated reducing end (the donor) to the non-reducing end of another 1,3-beta-glucan molecule (the acceptor) forming a 1,3-beta linkage, resulting in the elongation of 1,3-beta-glucan chains in the cell wall. Involved in spore wall assembly. The polypeptide is 1,3-beta-glucanosyltransferase PGA5 (PGA5) (Candida albicans (strain SC5314 / ATCC MYA-2876) (Yeast)).